The following is a 292-amino-acid chain: MEIVHVPVMVKEVLSYFSNLRGVFLDCTVGAGGHSEAILENIKGSVVIGIDVDEEILSVAKQRLKKYESEGRAKLLKATYVEAQRVLSQLGVKAVNGIIMDLGVSTLQLMKGERGFAFSSDGPLDMRMDKTQRLTAYDIVNFWQENQLRRIFFEYGEEKRYAGRIARFIVKNRPVETTAKLVEVIARALPEKERRFRRRHFATRVFQAIRIAVNNELENLRNFLVQVPDILNQNGRIIVISFHSLEDRIVKEAFRSIQELDVLTRKPVRPSLEEVRENPKARSAKMRIAERK.

S-adenosyl-L-methionine-binding positions include 32-34 (GGH), D51, L87, D101, and Q108.

The protein belongs to the methyltransferase superfamily. RsmH family.

It localises to the cytoplasm. It carries out the reaction cytidine(1402) in 16S rRNA + S-adenosyl-L-methionine = N(4)-methylcytidine(1402) in 16S rRNA + S-adenosyl-L-homocysteine + H(+). Its function is as follows. Specifically methylates the N4 position of cytidine in position 1402 (C1402) of 16S rRNA. The polypeptide is Ribosomal RNA small subunit methyltransferase H (Pseudothermotoga lettingae (strain ATCC BAA-301 / DSM 14385 / NBRC 107922 / TMO) (Thermotoga lettingae)).